Consider the following 312-residue polypeptide: Photosystem I assembly protein Ycf4 (312 aa).

A run of 3 helical transmembrane segments spans residues Trp42–Phe62, Ile91–Leu111, and Phe113–Tyr133.

Belongs to the Ycf4 family.

Its subcellular location is the plastid. The protein localises to the chloroplast thylakoid membrane. Functionally, seems to be required for the assembly of the photosystem I complex. This is Photosystem I assembly protein Ycf4 from Pleurastrum terricola (Filamentous green alga).